Reading from the N-terminus, the 105-residue chain is Large ribosomal subunit protein bL21 (105 aa).

This sequence belongs to the bacterial ribosomal protein bL21 family. In terms of assembly, part of the 50S ribosomal subunit. Contacts protein L20.

Its function is as follows. This protein binds to 23S rRNA in the presence of protein L20. The polypeptide is Large ribosomal subunit protein bL21 (Dictyoglomus thermophilum (strain ATCC 35947 / DSM 3960 / H-6-12)).